A 574-amino-acid chain; its full sequence is Isocitrate dehydrogenase kinase/phosphatase (574 aa).

Residues alanine 315–methionine 321 and lysine 336 contribute to the ATP site. Residue aspartate 371 is part of the active site.

The protein belongs to the AceK family.

The protein resides in the cytoplasm. The enzyme catalyses L-seryl-[isocitrate dehydrogenase] + ATP = O-phospho-L-seryl-[isocitrate dehydrogenase] + ADP + H(+). In terms of biological role, bifunctional enzyme which can phosphorylate or dephosphorylate isocitrate dehydrogenase (IDH) on a specific serine residue. This is a regulatory mechanism which enables bacteria to bypass the Krebs cycle via the glyoxylate shunt in response to the source of carbon. When bacteria are grown on glucose, IDH is fully active and unphosphorylated, but when grown on acetate or ethanol, the activity of IDH declines drastically concomitant with its phosphorylation. In Escherichia coli O127:H6 (strain E2348/69 / EPEC), this protein is Isocitrate dehydrogenase kinase/phosphatase.